Reading from the N-terminus, the 974-residue chain is UvrABC system protein A (974 aa).

ATP is bound at residue 34–41; that stretch reads GLSGSGKS. 2 ABC transporter domains span residues 331-610 and 630-959; these read WARS…TNSL and ISKT…QFLK. 663–670 contacts ATP; that stretch reads GVSGGGKS. The segment at 762–788 adopts a C4-type zinc-finger fold; it reads CEACQGDGVIKIEMHFLPDVYVTCDVC.

It belongs to the ABC transporter superfamily. UvrA family. Forms a heterotetramer with UvrB during the search for lesions.

The protein resides in the cytoplasm. In terms of biological role, the UvrABC repair system catalyzes the recognition and processing of DNA lesions. UvrA is an ATPase and a DNA-binding protein. A damage recognition complex composed of 2 UvrA and 2 UvrB subunits scans DNA for abnormalities. When the presence of a lesion has been verified by UvrB, the UvrA molecules dissociate. In Brucella suis biovar 1 (strain 1330), this protein is UvrABC system protein A.